Reading from the N-terminus, the 288-residue chain is MGIRVYRPYTPGVRQKTVSDFAEITTDKPEKSLTRGFKRDKGRNNRGVITSRRRGGGHKRRYRIVDFRRSSKLNIPAKVATVEYDPNRNARIALLHYRDGEKRYILHPRDLTPGTEIIASPDAPIEVGNALPLGKIPLGTSVHNVEITPGRGAQMVRAAGAMAQVVAKEGDMVTLKLPSGEVRLFRKECYATIGQVGNVEANNISLGKAGRNRWKGRRPKVRGSVMNPVDHPHGGGEGRAPIGRPGPVTPWGKPTLGYKTRKKKKLSDALIVRRRKKSSKRGRGGRQS.

Residues 29 to 43 (PEKSLTRGFKRDKGR) show a composition bias toward basic and acidic residues. Disordered regions lie at residues 29 to 59 (PEKS…GGHK) and 210 to 288 (GRNR…GRQS). Basic residues-rich tracts occupy residues 210–221 (GRNRWKGRRPKV) and 272–288 (VRRR…GRQS).

The protein belongs to the universal ribosomal protein uL2 family. Part of the 50S ribosomal subunit. Forms a bridge to the 30S subunit in the 70S ribosome.

Its function is as follows. One of the primary rRNA binding proteins. Required for association of the 30S and 50S subunits to form the 70S ribosome, for tRNA binding and peptide bond formation. It has been suggested to have peptidyltransferase activity; this is somewhat controversial. Makes several contacts with the 16S rRNA in the 70S ribosome. The protein is Large ribosomal subunit protein uL2 of Thermosynechococcus vestitus (strain NIES-2133 / IAM M-273 / BP-1).